The following is a 97-amino-acid chain: uncharacterized protein (97 aa).

Positions 72–97 are disordered; sequence TVERKRSEHTNSRKKDPSAYTWSDVK. The segment covering 73–88 has biased composition (basic and acidic residues); it reads VERKRSEHTNSRKKDP.

This sequence belongs to the chlamydial CPn_0121/CT_031/TC_0300 family.

This is an uncharacterized protein from Chlamydia pneumoniae (Chlamydophila pneumoniae).